Reading from the N-terminus, the 468-residue chain is Adenosylhomocysteinase (468 aa).

Residues Thr57, Asp132, and Glu194 each coordinate substrate. 195–197 lines the NAD(+) pocket; it reads TTT. The substrate site is built by Lys224 and Asp228. Residues Asn229, 258 to 263, Glu281, Asn316, 337 to 339, and Asn382 contribute to the NAD(+) site; these read GFGDVG and IGH.

Belongs to the adenosylhomocysteinase family. NAD(+) is required as a cofactor.

Its subcellular location is the cytoplasm. It carries out the reaction S-adenosyl-L-homocysteine + H2O = L-homocysteine + adenosine. The protein operates within amino-acid biosynthesis; L-homocysteine biosynthesis; L-homocysteine from S-adenosyl-L-homocysteine: step 1/1. May play a key role in the regulation of the intracellular concentration of adenosylhomocysteine. In Methylorubrum populi (strain ATCC BAA-705 / NCIMB 13946 / BJ001) (Methylobacterium populi), this protein is Adenosylhomocysteinase.